The primary structure comprises 569 residues: Proline--tRNA ligase (569 aa).

Belongs to the class-II aminoacyl-tRNA synthetase family. ProS type 1 subfamily. Homodimer.

The protein resides in the cytoplasm. It carries out the reaction tRNA(Pro) + L-proline + ATP = L-prolyl-tRNA(Pro) + AMP + diphosphate. In terms of biological role, catalyzes the attachment of proline to tRNA(Pro) in a two-step reaction: proline is first activated by ATP to form Pro-AMP and then transferred to the acceptor end of tRNA(Pro). As ProRS can inadvertently accommodate and process non-cognate amino acids such as alanine and cysteine, to avoid such errors it has two additional distinct editing activities against alanine. One activity is designated as 'pretransfer' editing and involves the tRNA(Pro)-independent hydrolysis of activated Ala-AMP. The other activity is designated 'posttransfer' editing and involves deacylation of mischarged Ala-tRNA(Pro). The misacylated Cys-tRNA(Pro) is not edited by ProRS. In Dehalococcoides mccartyi (strain CBDB1), this protein is Proline--tRNA ligase.